Here is a 159-residue protein sequence, read N- to C-terminus: UPF0178 protein AZC_4000 (159 aa).

This sequence belongs to the UPF0178 family.

The sequence is that of UPF0178 protein AZC_4000 from Azorhizobium caulinodans (strain ATCC 43989 / DSM 5975 / JCM 20966 / LMG 6465 / NBRC 14845 / NCIMB 13405 / ORS 571).